The primary structure comprises 415 residues: Imidazolonepropionase (415 aa).

Fe(3+) contacts are provided by His75 and His77. His75 and His77 together coordinate Zn(2+). Arg84, Tyr147, and His180 together coordinate 4-imidazolone-5-propanoate. Tyr147 contributes to the N-formimidoyl-L-glutamate binding site. Position 245 (His245) interacts with Fe(3+). A Zn(2+)-binding site is contributed by His245. A 4-imidazolone-5-propanoate-binding site is contributed by Gln248. Residue Asp320 participates in Fe(3+) binding. Asp320 contributes to the Zn(2+) binding site. N-formimidoyl-L-glutamate contacts are provided by Asn322 and Gly324. Residue Thr325 coordinates 4-imidazolone-5-propanoate.

It belongs to the metallo-dependent hydrolases superfamily. HutI family. Requires Zn(2+) as cofactor. Fe(3+) is required as a cofactor.

The protein resides in the cytoplasm. The enzyme catalyses 4-imidazolone-5-propanoate + H2O = N-formimidoyl-L-glutamate. The protein operates within amino-acid degradation; L-histidine degradation into L-glutamate; N-formimidoyl-L-glutamate from L-histidine: step 3/3. Catalyzes the hydrolytic cleavage of the carbon-nitrogen bond in imidazolone-5-propanoate to yield N-formimidoyl-L-glutamate. It is the third step in the universal histidine degradation pathway. This is Imidazolonepropionase from Photorhabdus laumondii subsp. laumondii (strain DSM 15139 / CIP 105565 / TT01) (Photorhabdus luminescens subsp. laumondii).